The primary structure comprises 236 residues: Ascorbate-specific transmembrane electron transporter 1 (236 aa).

Residues 1–11 (MGLGLGVRAAP) lie on the Cytoplasmic side of the membrane. Residues 12–32 (FTYAAHALAVAAAAMVLVWSI) form a helical membrane-spanning segment. The Cytochrome b561 domain occupies 15–219 (AAHALAVAAA…FGASVVVAAI (205 aa)). Residues 33–50 (QFRGGLAIESTNKNLIFN) are Extracellular-facing. Residues 51–71 (VHPVLMLIGYVIIGGEAIMVY) traverse the membrane as a helical segment. His-52 serves as a coordination point for heme b. 67-75 (AIMVYRVLP) contributes to the L-ascorbate binding site. The Cytoplasmic segment spans residues 72 to 84 (RVLPTSNHDTTKL). Residues 85–105 (IHLILHGIALVLGAVGIYFAF) form a helical membrane-spanning segment. Positions 86 and 120 each coordinate heme b. The Extracellular segment spans residues 106–122 (KNHNESGIANLYSLHSW). 116–125 (LYSLHSWIGI) is a monodehydro-L-ascorbate radical binding site. Residues 123–143 (IGIGTITLYGIQWIIGFVTFF) form a helical membrane-spanning segment. The Cytoplasmic portion of the chain corresponds to 144–153 (FPGAAPNVKK). Residues 154-174 (GVLPWHVLFGLFVYILALANA) traverse the membrane as a helical segment. Heme b is bound at residue His-159. Residues 175–201 (ELGFLEKLTFLESSGLDKYGTEAFLVN) lie on the Extracellular side of the membrane. The chain crosses the membrane as a helical span at residues 202–222 (FTALVVVLFGASVVVAAIAPV). Residues 223-236 (RLEEPQGYDPIPEN) lie on the Cytoplasmic side of the membrane.

The cofactor is heme b.

Its subcellular location is the membrane. With respect to regulation, inhibited by diethylpyrocarbonate. Its function is as follows. Two-heme-containing cytochrome. Catalyzes ascorbate-dependent trans-membrane electron transfer by utilizing a concerted H(+)/e(-) transfer mechanism. This is Ascorbate-specific transmembrane electron transporter 1 (ZCYB) from Zea mays (Maize).